The sequence spans 197 residues: Phosphoheptose isomerase (197 aa).

In terms of domain architecture, SIS spans 36–197; that stretch reads LFAALANNGR…IDALLLGDTE (162 aa). Residue 51 to 53 participates in substrate binding; sequence NGG. Residues H60 and E64 each coordinate Zn(2+). Substrate-binding positions include E64, 93–94, 119–121, S124, and Q174; these read ND and STS. Positions 174 and 182 each coordinate Zn(2+).

The protein belongs to the SIS family. GmhA subfamily. Homotetramer. The cofactor is Zn(2+).

The protein resides in the cytoplasm. It catalyses the reaction 2 D-sedoheptulose 7-phosphate = D-glycero-alpha-D-manno-heptose 7-phosphate + D-glycero-beta-D-manno-heptose 7-phosphate. It participates in carbohydrate biosynthesis; D-glycero-D-manno-heptose 7-phosphate biosynthesis; D-glycero-alpha-D-manno-heptose 7-phosphate and D-glycero-beta-D-manno-heptose 7-phosphate from sedoheptulose 7-phosphate: step 1/1. Functionally, catalyzes the isomerization of sedoheptulose 7-phosphate in D-glycero-D-manno-heptose 7-phosphate. The chain is Phosphoheptose isomerase from Bordetella avium (strain 197N).